A 259-amino-acid chain; its full sequence is Bisphosphoglycerate mutase (259 aa).

Residue Ser-2 is modified to N-acetylserine. Substrate contacts are provided by residues 10–17 (RHGEGAWN), 23–24 (CS), Arg-62, 89–92 (ERHY), Arg-100, and 116–117 (RR). His-11 (tele-phosphohistidine intermediate) is an active-site residue. The active-site Proton donor/acceptor is Glu-89. Phosphothreonine is present on Thr-122. 189–190 (GN) contributes to the substrate binding site.

This sequence belongs to the phosphoglycerate mutase family. BPG-dependent PGAM subfamily. As to quaternary structure, homodimer.

The enzyme catalyses (2R)-3-phospho-glyceroyl phosphate = (2R)-2,3-bisphosphoglycerate + H(+). It catalyses the reaction (2R)-2-phosphoglycerate = (2R)-3-phosphoglycerate. Its activity is regulated as follows. At alkaline pH BPGM favors the synthase reaction; however, at lower pH the phosphatase reaction is dominant. Inhibited by citrate. Functionally, plays a major role in regulating hemoglobin oxygen affinity by controlling the levels of its allosteric effector 2,3-bisphosphoglycerate (2,3-BPG). Also exhibits mutase (EC 5.4.2.11) activity. The polypeptide is Bisphosphoglycerate mutase (BPGM) (Macaca fascicularis (Crab-eating macaque)).